The chain runs to 199 residues: Thymidine kinase (199 aa).

Residues 15–22 (GSMFSGKS) and 88–91 (DEVQ) contribute to the ATP site. Glu89 serves as the catalytic Proton acceptor. Zn(2+) contacts are provided by Cys145, Cys148, Cys183, and His186.

The protein belongs to the thymidine kinase family. In terms of assembly, homotetramer.

The protein resides in the cytoplasm. The catalysed reaction is thymidine + ATP = dTMP + ADP + H(+). The sequence is that of Thymidine kinase from Staphylococcus aureus (strain Mu50 / ATCC 700699).